We begin with the raw amino-acid sequence, 482 residues long: Cobyric acid synthase (482 aa).

Residues 249 to 436 (QCKIACLALS…LHGLFTSDDF (188 aa)) form the GATase cobBQ-type domain. Residue Cys331 is the Nucleophile of the active site. Residue His428 is part of the active site.

Belongs to the CobB/CobQ family. CobQ subfamily.

Its pathway is cofactor biosynthesis; adenosylcobalamin biosynthesis. Functionally, catalyzes amidations at positions B, D, E, and G on adenosylcobyrinic A,C-diamide. NH(2) groups are provided by glutamine, and one molecule of ATP is hydrogenolyzed for each amidation. The sequence is that of Cobyric acid synthase from Bradyrhizobium diazoefficiens (strain JCM 10833 / BCRC 13528 / IAM 13628 / NBRC 14792 / USDA 110).